Reading from the N-terminus, the 343-residue chain is ATP-dependent (S)-NAD(P)H-hydrate dehydratase (343 aa).

Residues 1-42 (MAVCPYGAAAVVMALLSAAIAFHCSPLLAVLQRALSLHTAHA) constitute a mitochondrion transit peptide. The YjeF C-terminal domain maps to 49–340 (LFQLVRNIVP…AEVGAAFSKL (292 aa)). K63 is subject to N6-acetyllysine. A Phosphotyrosine modification is found at Y81. (6S)-NADPHX contacts are provided by residues G149 and 202 to 208 (NHVEFSR). ATP is bound by residues 242 to 246 (KGEQD) and 261 to 270 (GSSRRCGGQG). D271 is a (6S)-NADPHX binding site.

This sequence belongs to the NnrD/CARKD family. Mg(2+) is required as a cofactor.

It is found in the mitochondrion. It catalyses the reaction (6S)-NADHX + ATP = ADP + phosphate + NADH + H(+). The catalysed reaction is (6S)-NADPHX + ATP = ADP + phosphate + NADPH + H(+). Functionally, catalyzes the dehydration of the S-form of NAD(P)HX at the expense of ATP, which is converted to ADP. Together with NAD(P)HX epimerase, which catalyzes the epimerization of the S- and R-forms, the enzyme allows the repair of both epimers of NAD(P)HX, a damaged form of NAD(P)H that is a result of enzymatic or heat-dependent hydration. The polypeptide is ATP-dependent (S)-NAD(P)H-hydrate dehydratase (Rattus norvegicus (Rat)).